The sequence spans 205 residues: LexA repressor (205 aa).

The segment at residues 28–48 is a DNA-binding region (H-T-H motif); it reads RAEIARRLGFKSANAAEEHLK. Catalysis depends on for autocatalytic cleavage activity residues S122 and K159.

It belongs to the peptidase S24 family. As to quaternary structure, homodimer.

The catalysed reaction is Hydrolysis of Ala-|-Gly bond in repressor LexA.. Its function is as follows. Represses a number of genes involved in the response to DNA damage (SOS response), including recA and lexA. In the presence of single-stranded DNA, RecA interacts with LexA causing an autocatalytic cleavage which disrupts the DNA-binding part of LexA, leading to derepression of the SOS regulon and eventually DNA repair. The protein is LexA repressor of Shewanella loihica (strain ATCC BAA-1088 / PV-4).